The primary structure comprises 57 residues: MAVPKRKMSRSNTRHRRSQWKAAVPTLVACERCHEPKLQHIACPSCGTYNKRQVLEV.

Belongs to the bacterial ribosomal protein bL32 family.

The sequence is that of Large ribosomal subunit protein bL32 from Streptomyces avermitilis (strain ATCC 31267 / DSM 46492 / JCM 5070 / NBRC 14893 / NCIMB 12804 / NRRL 8165 / MA-4680).